A 414-amino-acid chain; its full sequence is Mini-circle putative transposase for IS117 (414 aa).

The sequence is that of Mini-circle putative transposase for IS117 from Streptomyces coelicolor (strain ATCC BAA-471 / A3(2) / M145).